A 349-amino-acid polypeptide reads, in one-letter code: tRNA pseudouridine synthase D (349 aa).

Phe27 lines the substrate pocket. Asp80 acts as the Nucleophile in catalysis. Asn129 contributes to the substrate binding site. Positions 155-303 constitute a TRUD domain; the sequence is GVPNYFGAQR…VEAARRAMLL (149 aa). Phe329 serves as a coordination point for substrate.

Belongs to the pseudouridine synthase TruD family.

The enzyme catalyses uridine(13) in tRNA = pseudouridine(13) in tRNA. Responsible for synthesis of pseudouridine from uracil-13 in transfer RNAs. In Escherichia coli (strain K12 / MC4100 / BW2952), this protein is tRNA pseudouridine synthase D.